We begin with the raw amino-acid sequence, 536 residues long: Velvet complex subunit B (536 aa).

Positions 1-26 (MIQRTTDPAAGSSTSGPPTNSLSWGS) are enriched in polar residues. Disordered stretches follow at residues 1 to 27 (MIQR…WGSR), 106 to 143 (PNAA…AIPF), 157 to 409 (SAPA…RTLV), and 508 to 536 (KLPL…EESD). The Velvet domain maps to 25–512 (GSRHNGKLYT…NQQNMKLPLR (488 aa)). Over residues 114 to 143 (PPMPAKPRRPTNPPPPSNTHGSPPAPAIPF) the composition is skewed to pro residues. 2 stretches are compositionally biased toward low complexity: residues 158–170 (APAS…SASA) and 190–265 (PYGP…YPPY). Positions 280–305 (TSNFDHSQPVTSSVDQETNSPVVTTT) are enriched in polar residues. Over residues 306 to 315 (ARDDDQREGE) the composition is skewed to basic and acidic residues. The segment covering 328-342 (PSNSGAPSTSPTAST) has biased composition (low complexity). The segment covering 356 to 399 (EEREGPDGGPDLREPIEPGSTKAREEEDARTGTEKGDPKDKSDA) has biased composition (basic and acidic residues). Residues 400–409 (QRATYTRTLV) show a composition bias toward polar residues. Basic residues predominate over residues 511-525 (LRNRHGSGSKRRRRG).

The protein belongs to the velvet family. VelB subfamily. Component of the heterotrimeric velvet complex composed of laeA, veA and velB; VeA acting as a bridging protein between laeA and velB. Forms a heterodimeric complex with vosA; the formation of the velB-vosA complex is light-dependent.

It is found in the nucleus. The protein localises to the cytoplasm. Its function is as follows. Component of the velvet transcription factor complex that controls sexual/asexual developmental ratio in response to light, promoting sexual development in the darkness while stimulating asexual sporulation under illumination. The velvet complex acts as a global regulator for secondary metabolite gene expression. Component of the velB-VosA heterodimeric complex that plays a dual role in activating genes associated with spore maturation and repressing certain development-associated genes. The velB-VosA complex binds DNA through the DNA-binding domain of vosA that recognizes an 11-nucleotide consensus sequence 5'-CTGGCCGCGGC-3' consisting of two motifs in the promoters of key developmental regulatory genes. This chain is Velvet complex subunit B, found in Schizophyllum commune (strain H4-8 / FGSC 9210) (Split gill fungus).